Here is a 192-residue protein sequence, read N- to C-terminus: MKNLFRPLIVIFAVLTAVTGLAYPAVMTAVGQAAFSDQANGSMLEQDGKVVGSKLIGQQFDAPQYFWGRLSATSPMPYNAQGSGGSNLGPTNPALLDEIKGRIDALKTAGTDMSKPVPVDLVTSSGSGLDPEISPAAAAYQIERVAKARKLAANDVQALVDRYTSGRQFGILGEPRVNVLQLNLALDEMKHG.

A helical transmembrane segment spans residues Pro-7 to Met-27.

Belongs to the KdpC family. The system is composed of three essential subunits: KdpA, KdpB and KdpC.

The protein resides in the cell inner membrane. In terms of biological role, part of the high-affinity ATP-driven potassium transport (or Kdp) system, which catalyzes the hydrolysis of ATP coupled with the electrogenic transport of potassium into the cytoplasm. This subunit acts as a catalytic chaperone that increases the ATP-binding affinity of the ATP-hydrolyzing subunit KdpB by the formation of a transient KdpB/KdpC/ATP ternary complex. The sequence is that of Potassium-transporting ATPase KdpC subunit from Paraburkholderia phytofirmans (strain DSM 17436 / LMG 22146 / PsJN) (Burkholderia phytofirmans).